We begin with the raw amino-acid sequence, 54 residues long: Large ribosomal subunit protein bL33 (54 aa).

This sequence belongs to the bacterial ribosomal protein bL33 family.

This Herpetosiphon aurantiacus (strain ATCC 23779 / DSM 785 / 114-95) protein is Large ribosomal subunit protein bL33.